A 385-amino-acid polypeptide reads, in one-letter code: Isocitrate dehydrogenase [NAD] subunit beta, mitochondrial (385 aa).

Residues 1 to 34 constitute a mitochondrion transit peptide; it reads MAALSGVRWLTRALVSAGNPGAWRGLSTSAAAHA. An N6-acetyllysine modification is found at Lys199.

The protein belongs to the isocitrate and isopropylmalate dehydrogenases family. As to quaternary structure, heterooligomer of subunits alpha (IDH3A), beta (IDH3B), and gamma (IDH3G) in the apparent ratio of 2:1:1. The heterodimer containing one IDH3A and one IDH3B subunit and the heterodimer containing one IDH3A and one IDH3G subunit assemble into a heterotetramer (which contains two subunits of IDH3A, one of IDH3B and one of IDH3G) and further into the heterooctamer.

Its subcellular location is the mitochondrion. The heterotetramer and the heterodimer composed of IDH3A and IDH3G subunits can be allosterically activated by citrate (CIT) or/and ADP, and the two activators can act independently or synergistically. The heterodimer composed of IDH3A and IDH3B subunits cannot be allosterically regulated and the allosteric regulation of the heterotetramer is through the IDH3G subunit and not the IDH3B subunit. The IDH3G subunit contains the allosteric site which consists of a CIT-binding site and an ADP-binding site, and the binding of CIT and ADP causes conformational changes at the allosteric site which are transmitted to the active site in the catalytic subunit (IDH3A) through a cascade of conformational changes at the heterodimer interface, leading to stabilization of the isocitrate-binding at the active site and thus activation of the enzyme. ATP can activate the heterotetramer and the heterodimer composed of IDH3A and IDH3G subunits at low concentrations but inhibits their activities at high concentrations, whereas ATP exhibits only inhibitory effect on the heterodimer composed of IDH3A and IDH3B subunits. Plays a structural role to facilitate the assembly and ensure the full activity of the enzyme catalyzing the decarboxylation of isocitrate (ICT) into alpha-ketoglutarate. The heterodimer composed of the alpha (IDH3A) and beta (IDH3B) subunits and the heterodimer composed of the alpha (IDH3A) and gamma (IDH3G) subunits, have considerable basal activity but the full activity of the heterotetramer (containing two subunits of IDH3A, one of IDH3B and one of IDH3G) requires the assembly and cooperative function of both heterodimers. The sequence is that of Isocitrate dehydrogenase [NAD] subunit beta, mitochondrial (IDH3B) from Homo sapiens (Human).